The following is a 466-amino-acid chain: Ribulose bisphosphate carboxylase large chain (466 aa).

K5 carries the post-translational modification N6,N6,N6-trimethyllysine. N114 and T164 together coordinate substrate. The Proton acceptor role is filled by K166. Residue K168 participates in substrate binding. Mg(2+)-binding residues include K192, D194, and E195. The residue at position 192 (K192) is an N6-carboxylysine. Catalysis depends on H285, which acts as the Proton acceptor. Positions 286, 318, and 370 each coordinate substrate.

This sequence belongs to the RuBisCO large chain family. Type I subfamily. As to quaternary structure, heterohexadecamer of 8 large chains and 8 small chains; disulfide-linked. The disulfide link is formed within the large subunit homodimers. Requires Mg(2+) as cofactor. In terms of processing, the disulfide bond which can form in the large chain dimeric partners within the hexadecamer appears to be associated with oxidative stress and protein turnover.

The protein localises to the plastid. The protein resides in the chloroplast. The enzyme catalyses 2 (2R)-3-phosphoglycerate + 2 H(+) = D-ribulose 1,5-bisphosphate + CO2 + H2O. It carries out the reaction D-ribulose 1,5-bisphosphate + O2 = 2-phosphoglycolate + (2R)-3-phosphoglycerate + 2 H(+). Its function is as follows. RuBisCO catalyzes two reactions: the carboxylation of D-ribulose 1,5-bisphosphate, the primary event in carbon dioxide fixation, as well as the oxidative fragmentation of the pentose substrate in the photorespiration process. Both reactions occur simultaneously and in competition at the same active site. This Caltha palustris (Yellow marsh marigold) protein is Ribulose bisphosphate carboxylase large chain.